The chain runs to 246 residues: MTRSKILVLIPARMASTRLPGKPLLDIAGVPMIVQVLRRAEEAAIGRVAVATDTPEIAAAVTAAGGEVVMTRPDHPSGSDRIYEALCKLDPAGEADFVVNLQGDFPTIDPRSISDVLPPLDDPAVDIATLAAQIHTEEESLNPNVVKAVGSPLGGRRMRALYFTRATAPHGDGPRYHHIGLYAYRRAALERFVRLPPSPLEQQEKLEQLRALEAGMRIDVMVVDAVPRGVDTPADLETARRLLSKA.

The protein belongs to the KdsB family.

Its subcellular location is the cytoplasm. The enzyme catalyses 3-deoxy-alpha-D-manno-oct-2-ulosonate + CTP = CMP-3-deoxy-beta-D-manno-octulosonate + diphosphate. The protein operates within nucleotide-sugar biosynthesis; CMP-3-deoxy-D-manno-octulosonate biosynthesis; CMP-3-deoxy-D-manno-octulosonate from 3-deoxy-D-manno-octulosonate and CTP: step 1/1. It participates in bacterial outer membrane biogenesis; lipopolysaccharide biosynthesis. In terms of biological role, activates KDO (a required 8-carbon sugar) for incorporation into bacterial lipopolysaccharide in Gram-negative bacteria. This chain is 3-deoxy-manno-octulosonate cytidylyltransferase, found in Bradyrhizobium sp. (strain ORS 278).